We begin with the raw amino-acid sequence, 150 residues long: MARQFVVLVLLTLTIATAFAADAPSASPKKSPSPTAAPTKAPTATTKAPSAPTKAPAAAPKSSSASSPKASSPAAEGPVPEDDYSASSPSDSAEAPTVSSPPAPTPDSTSAADGPSDGPTAESPKSGAVTTAKFSVVGTVATVGFFFFSF.

Residues 1–20 (MARQFVVLVLLTLTIATAFA) form the signal peptide. 2 stretches are compositionally biased toward low complexity: residues 19–75 (FAAD…SPAA) and 85–98 (SASS…APTV). Residues 19–131 (FAADAPSASP…ESPKSGAVTT (113 aa)) are disordered. S126 carries the GPI-anchor amidated serine lipid modification. A propeptide spans 127–150 (GAVTTAKFSVVGTVATVGFFFFSF) (removed in mature form).

It belongs to the classical AGP family. O-glycosylated on the hydroxyproline residues. In terms of tissue distribution, expressed in the anthers.

It localises to the cell membrane. In terms of biological role, proteoglycan that seems to be implicated in diverse developmental roles such as differentiation, cell-cell recognition, embryogenesis and programmed cell death. Plays an important role during the formation of the nexine layer of the pollen wall. The polypeptide is Classical arabinogalactan protein 6 (AGP6) (Arabidopsis thaliana (Mouse-ear cress)).